We begin with the raw amino-acid sequence, 374 residues long: Gustatory receptor 23a (374 aa).

Topologically, residues 1–6 (MFPPTR) are cytoplasmic. The chain crosses the membrane as a helical span at residues 7–27 (VQASSRVVLKIFHFILVAFSL). Topologically, residues 28–36 (RSRRLSRLV) are extracellular. A helical transmembrane segment spans residues 37 to 57 (LWLQFLGWLTWFISMWTQSVI). Over 58–72 (YAQTIDCTLDCSLRH) the chain is Cytoplasmic. The helical transmembrane segment at 73–93 (ILTFFQTVSHAFIVVTSFLDG) threads the bilayer. Residues 94–112 (FRIKQDQLDEPIAFEDSDP) lie on the Extracellular side of the membrane. The chain crosses the membrane as a helical span at residues 113 to 133 (WLAFTVLAMLVPTLGVEYLVC). Over 134 to 226 (SNAPEYAFRI…YNDLHYLFVR (93 aa)) the chain is Cytoplasmic. The chain crosses the membrane as a helical span at residues 227–247 (INGYFGGSLLTIIIVHFAIFV). Over 248 to 263 (SNSYWLFVDIRTRPWR) the chain is Extracellular. The chain crosses the membrane as a helical span at residues 264 to 284 (IYAILLNLGFIFNVALQMAAA). Over 285–343 (CWHCQQSYNLGRQIGCLISKLVKPQGSKLYNDLVSEFSLQTLHQRFVVTAKDFFSLNLH) the chain is Cytoplasmic. The chain crosses the membrane as a helical span at residues 344-364 (LLSSMFAAVVTYLVILIQFMF). The Extracellular segment spans residues 365-374 (AERSSTRGSG).

Belongs to the insect chemoreceptor superfamily. Gustatory receptor (GR) family. Gr2a subfamily. In terms of tissue distribution, expressed in the adult labellar chemosensory neurons and labral sense organ. Expressed in neurons of the dorsal pharyngeal sense organ of larvae.

It localises to the cell membrane. Its function is as follows. Probable gustatory receptor which mediates acceptance or avoidance behavior, depending on its substrates. In Drosophila melanogaster (Fruit fly), this protein is Gustatory receptor 23a (Gr23a).